We begin with the raw amino-acid sequence, 240 residues long: Sugar fermentation stimulation protein homolog (240 aa).

It belongs to the SfsA family.

In Natranaerobius thermophilus (strain ATCC BAA-1301 / DSM 18059 / JW/NM-WN-LF), this protein is Sugar fermentation stimulation protein homolog.